Here is a 320-residue protein sequence, read N- to C-terminus: Probable serine proteinase inhibitor 1 (320 aa).

It belongs to the serpin family. Poxviruses subfamily.

The polypeptide is Probable serine proteinase inhibitor 1 (SPI-1) (Swinepox virus (strain Kasza) (SWPV)).